The primary structure comprises 228 residues: MQKLKQQVFDANMDLPRYGLVTFTWGNVSAIDRERGLVVIKPSGVAYETMKVDDMVVVDMDGKVVEGRYRPSSDTATHLALYQRYPSLGGVVHTHSTHATAWAQAGMAIPALGTTHADYFFGDIPCTRALSEEEVQGEYELNTGKVIIETLGEVEPLHTPGIVVYQHGPFAWGKDAHDAVHNAVVMEEVARMAWIARGINPALNPIDDYLMNKHFMRKHGPNAYYGQK.

Substrate is bound by residues 26–27 (GN), 43–44 (SG), and 72–73 (SS). Residues Asp74, His93, and His95 each coordinate Zn(2+). Asp118 (proton donor/acceptor) is an active-site residue. His167 contributes to the Zn(2+) binding site. Tyr225 functions as the Proton donor/acceptor in the catalytic mechanism.

This sequence belongs to the aldolase class II family. AraD/FucA subfamily. Requires Zn(2+) as cofactor.

It catalyses the reaction L-ribulose 5-phosphate = D-xylulose 5-phosphate. The protein operates within cofactor degradation; L-ascorbate degradation; D-xylulose 5-phosphate from L-ascorbate: step 4/4. Its function is as follows. Catalyzes the isomerization of L-ribulose 5-phosphate to D-xylulose 5-phosphate. Is involved in the anaerobic L-ascorbate utilization. This chain is L-ribulose-5-phosphate 4-epimerase UlaF, found in Salmonella paratyphi B (strain ATCC BAA-1250 / SPB7).